Reading from the N-terminus, the 76-residue chain is Exodeoxyribonuclease 7 small subunit (76 aa).

This sequence belongs to the XseB family. In terms of assembly, heterooligomer composed of large and small subunits.

Its subcellular location is the cytoplasm. It catalyses the reaction Exonucleolytic cleavage in either 5'- to 3'- or 3'- to 5'-direction to yield nucleoside 5'-phosphates.. Bidirectionally degrades single-stranded DNA into large acid-insoluble oligonucleotides, which are then degraded further into small acid-soluble oligonucleotides. The polypeptide is Exodeoxyribonuclease 7 small subunit (Methylococcus capsulatus (strain ATCC 33009 / NCIMB 11132 / Bath)).